The chain runs to 142 residues: Small ribosomal subunit protein uS11c (142 aa).

This sequence belongs to the universal ribosomal protein uS11 family. In terms of assembly, part of the 30S ribosomal subunit.

The protein localises to the plastid. The protein resides in the chloroplast. The sequence is that of Small ribosomal subunit protein uS11c from Welwitschia mirabilis (Tree tumbo).